Here is a 1159-residue protein sequence, read N- to C-terminus: ATP-dependent helicase/deoxyribonuclease subunit B (1159 aa).

8 to 15 (GRAGSGKT) contacts ATP. Positions 784, 1102, 1105, and 1111 each coordinate [4Fe-4S] cluster. Residues 1140-1159 (VKEDGSQVDGRTEGSDNNEG) are disordered.

The protein belongs to the helicase family. AddB/RexB type 1 subfamily. In terms of assembly, heterodimer of AddA and AddB. It depends on Mg(2+) as a cofactor. The cofactor is [4Fe-4S] cluster.

Functionally, the heterodimer acts as both an ATP-dependent DNA helicase and an ATP-dependent, dual-direction single-stranded exonuclease. Recognizes the chi site generating a DNA molecule suitable for the initiation of homologous recombination. The AddB subunit has 5' -&gt; 3' nuclease activity but not helicase activity. The polypeptide is ATP-dependent helicase/deoxyribonuclease subunit B (Caldanaerobacter subterraneus subsp. tengcongensis (strain DSM 15242 / JCM 11007 / NBRC 100824 / MB4) (Thermoanaerobacter tengcongensis)).